Reading from the N-terminus, the 274-residue chain is MSASGEISTPRDYIGHHLNHLQLDLRTFELVNPHSTGPATFWTLNIDSLFFSVVLGLAFLLVFRKVAASATSGVPGKLQTAVELIIGFVDNSVRDMYHGKSKVIAPLALTVFVWVLLMNMMDLLPIDLLPYIGEHVFGLPALRVVPTADVSITLSMALGVFILIIFYSIKMKGVGGFTKELTMQPFNHPIFIPVNLILEGVSLLSKPLSLGLRLFGNMYAGELIFILIAGLLPWWSQWMLSVPWAIFHILIITLQAFIFMVLTIVYLSMASEEH.

5 consecutive transmembrane segments (helical) span residues Thr43–Phe63, Val103–Leu123, Asp149–Ile169, Leu223–Pro243, and Ala245–Val265.

The protein belongs to the ATPase A chain family. As to quaternary structure, F-type ATPases have 2 components, CF(1) - the catalytic core - and CF(0) - the membrane proton channel. CF(1) has five subunits: alpha(3), beta(3), gamma(1), delta(1), epsilon(1). CF(0) has three main subunits: a(1), b(2) and c(9-12). The alpha and beta chains form an alternating ring which encloses part of the gamma chain. CF(1) is attached to CF(0) by a central stalk formed by the gamma and epsilon chains, while a peripheral stalk is formed by the delta and b chains.

The protein resides in the cell inner membrane. In terms of biological role, key component of the proton channel; it plays a direct role in the translocation of protons across the membrane. The sequence is that of ATP synthase subunit a from Yersinia pestis bv. Antiqua (strain Antiqua).